The sequence spans 348 residues: Putative 4-hydroxythreonine-4-phosphate dehydrogenase 2 (348 aa).

A divalent metal cation-binding residues include H180, H224, and H279.

This sequence belongs to the PdxA family. Homodimer. It depends on Zn(2+) as a cofactor. Requires Mg(2+) as cofactor. Co(2+) is required as a cofactor.

Its subcellular location is the cytoplasm. The catalysed reaction is 4-(phosphooxy)-L-threonine + NAD(+) = 3-amino-2-oxopropyl phosphate + CO2 + NADH. It participates in cofactor biosynthesis; pyridoxine 5'-phosphate biosynthesis; pyridoxine 5'-phosphate from D-erythrose 4-phosphate: step 4/5. Catalyzes the NAD(P)-dependent oxidation of 4-(phosphooxy)-L-threonine (HTP) into 2-amino-3-oxo-4-(phosphooxy)butyric acid which spontaneously decarboxylates to form 3-amino-2-oxopropyl phosphate (AHAP). The chain is Putative 4-hydroxythreonine-4-phosphate dehydrogenase 2 from Rhizobium meliloti (strain 1021) (Ensifer meliloti).